The chain runs to 553 residues: Pumilio domain-containing protein 5 (553 aa).

Pumilio repeat units follow at residues 146–184 (DVVS…VLFD), 185–223 (KLTE…RLVR), 224–260 (KMCD…KLVE), 261–296 (KISS…SFFV), 297–335 (KFLC…HCFN), 347–384 (SVAR…TIIE), 386–421 (CLLR…EMMD), and 432–472 (ETNR…KMVA). Residues 499–514 (FSSGKKIIESLQKLNV) form an RNA-binding region.

As to expression, detected in differentiating oocytes with highest levels observed in developing ooctyes in the distal portion of the proximal gonad.

It localises to the cytoplasm. The protein resides in the P-body. Its function is as follows. RNA-binding protein that binds to the consensus sequence 5'-CUCUGUAUCUUGU-3' in mRNA 3'-UTRs and modulates mRNA expression and stability. Functions redundantly with puf-6 and puf-7 in oocyte formation and organization, early embryonic cell divisions, and repression of expression of glp-1 and other maternal mRNAs in late oogenesis. The sequence is that of Pumilio domain-containing protein 5 from Caenorhabditis elegans.